Consider the following 705-residue polypeptide: SPbeta prophage-derived sublancin-168-processing and transport ATP-binding protein SunT (705 aa).

The 127-residue stretch at 12 to 138 (QFNSHDCGLA…SKFTNFILEI (127 aa)) folds into the Peptidase C39 domain. Cysteine 18 is an active-site residue. 6 consecutive transmembrane segments (helical) span residues 167-187 (IVFV…AGSF), 205-225 (LITI…FDFV), 281-301 (ANFV…VILY), 306-326 (ILFL…ILFF), 388-408 (VISN…IILW), and 418-438 (SMSL…LSSL). The ABC transmembrane type-1 domain occupies 168 to 450 (VFVILLTSLF…ILSMQSDLQQ (283 aa)). The ABC transporter domain occupies 483 to 705 (IKTVNLNIGA…SYSENKEYSI (223 aa)). 516–523 (GESGTGKS) contributes to the ATP binding site.

The protein belongs to the ABC transporter superfamily. SunT family. As to quaternary structure, homodimer.

The protein localises to the cell membrane. Functionally, sunT (TC 3.A.1.112.4) is required for production of the lantibiotic sublancin-168, probably by both processing the signal peptide and exporting the resulting mature lantibiotic. This chain is SPbeta prophage-derived sublancin-168-processing and transport ATP-binding protein SunT (sunT), found in Bacillus subtilis (strain 168).